We begin with the raw amino-acid sequence, 587 residues long: MKFAISTLLIILQAAAVFAAFPISDITVVSERTDASTAYLSDWFVVSFVFSTAGSDETIAGDATIEVSIPNELEFVQYPDSVDPSVSEFFTTAGVQVLSTAFDYDSHVLTFTFSDPGQVITDLEGVVFFTLKLSEQFTESASPGQHTFDFETSDQTYSPSVDLVALDRSQPIKLSNAVTGGVEWFVDIPGAFGDITNIDISTVQTPGTFDCSEVKYAVGSSLNEFGDFTPQDRTTFFSNSSSGEWIPITPASGLPVESFECGDGTISLSFAGELADDEVLRVSFLSNLADDVLEVQNVVNVDLTTADSRKRALTSFVLDEPFYRASRTDTAAFEAFAAVPADGDITSTSTAITSVTATVTHTTVTSVCYVCAETPVTVTYTAPVITNPIYYTTKVHVCNVCAETPITYTVTIPCETDEYAPAKPTGTEGEKIVTVITKEGGDKYTKTYEEVTYTKTYPKGGHEDHIVTVKTKEGGEKVTKTYEEVTYTKGPEIVTVVTKEGGEKVTTTYHDVPEVVTVITKEGGEKVTTTYPATYPATYTEGHSAGVPTSASTPPQATYTVSEAQVNLGSKSAVGLLAIVPMLFLAI.

Positions 1–19 (MKFAISTLLIILQAAAVFA) are cleaved as a signal peptide. A disulfide bridge connects residues Cys211 and Cys261. N-linked (GlcNAc...) asparagine glycosylation is present at Asn239. 4 tandem repeats follow at residues 432 to 455 (IVTV…TYTK), 466 to 489 (IVTV…TYTK), 491 to 512 (PEIV…YHDV), and 513 to 531 (PEVV…TTTY). Residues 432–531 (IVTVITKEGG…EGGEKVTTTY (100 aa)) are 4 X 24 AA approximate tandem repeats, Thr-rich. Ser562 carries GPI-anchor amidated serine lipidation. Positions 563 to 587 (EAQVNLGSKSAVGLLAIVPMLFLAI) are cleaved as a propeptide — removed in mature form.

Post-translationally, the GPI-anchor is attached to the protein in the endoplasmic reticulum and serves to target the protein to the cell surface. There, the glucosamine-inositol phospholipid moiety is cleaved off and the GPI-modified mannoprotein is covalently attached via its lipidless GPI glycan remnant to the 1,6-beta-glucan of the outer cell wall layer.

The protein localises to the cell membrane. It is found in the secreted. Its subcellular location is the cell wall. Functionally, putative adhesion protein. May be involved in cell-cell interaction, interacting with other proteins by salt bridges and hydrogen bonds. This Komagataella phaffii (strain ATCC 76273 / CBS 7435 / CECT 11047 / NRRL Y-11430 / Wegner 21-1) (Yeast) protein is Putative adhesin.